A 533-amino-acid chain; its full sequence is GMP synthase [glutamine-hydrolyzing] (533 aa).

Positions 22 to 215 constitute a Glutamine amidotransferase type-1 domain; it reads RILILDFGSQ…THNVAGCSGT (194 aa). The active-site Nucleophile is the Cys-99. Residues His-189 and Glu-191 contribute to the active site. The region spanning 216–408 is the GMPS ATP-PPase domain; sequence WTMAGFRELE…LGIPESIVGR (193 aa). 243–249 is a binding site for ATP; it reads SGGVDSS.

In terms of assembly, homodimer.

The catalysed reaction is XMP + L-glutamine + ATP + H2O = GMP + L-glutamate + AMP + diphosphate + 2 H(+). Its pathway is purine metabolism; GMP biosynthesis; GMP from XMP (L-Gln route): step 1/1. Catalyzes the synthesis of GMP from XMP. This Gluconobacter oxydans (strain 621H) (Gluconobacter suboxydans) protein is GMP synthase [glutamine-hydrolyzing].